Reading from the N-terminus, the 91-residue chain is Alpha-defensin 31 (91 aa).

An N-terminal signal peptide occupies residues 1–19 (MKKLVLLFALVLLAFQVQA). A propeptide spanning residues 20 to 65 (DSIQNTDEETKTEEQQGEEDQAVSVSFGDPQGSGLQDAALGWGRRC) is cleaved from the precursor. The segment at 22–55 (IQNTDEETKTEEQQGEEDQAVSVSFGDPQGSGLQ) is disordered. A run of 6 repeats spans residues 65–67 (CPR), 68–70 (CPP), 71–73 (CPR), 77–79 (CPR), 80–82 (CPT), and 83–85 (CPR). The tract at residues 65 to 85 (CPRCPPCPRCSWCPRCPTCPR) is 6 X 3 AA tandem repeats of C-P-X.

It belongs to the alpha-defensin family. Paneth cells of the small bowel.

The protein resides in the secreted. Functionally, apparent precursor of a secreted, cationic, proline- and cysteine-rich peptide that contains Cys-Pro-Xaa repeats. Unlike cryptdin, the proposed mature peptide region lacks the structural motif characteristic of defensins. It may have microbicidal activities. In Mus musculus (Mouse), this protein is Alpha-defensin 31.